Here is a 641-residue protein sequence, read N- to C-terminus: 1-deoxy-D-xylulose-5-phosphate synthase (641 aa).

Residues His-79 and 120-122 contribute to the thiamine diphosphate site; that span reads GHS. Position 151 (Asp-151) interacts with Mg(2+). Thiamine diphosphate-binding positions include 152 to 153, Asn-180, Tyr-291, and Glu-375; that span reads GS. Asn-180 lines the Mg(2+) pocket.

The protein belongs to the transketolase family. DXPS subfamily. In terms of assembly, homodimer. Requires Mg(2+) as cofactor. Thiamine diphosphate serves as cofactor.

The catalysed reaction is D-glyceraldehyde 3-phosphate + pyruvate + H(+) = 1-deoxy-D-xylulose 5-phosphate + CO2. It participates in metabolic intermediate biosynthesis; 1-deoxy-D-xylulose 5-phosphate biosynthesis; 1-deoxy-D-xylulose 5-phosphate from D-glyceraldehyde 3-phosphate and pyruvate: step 1/1. Its function is as follows. Catalyzes the acyloin condensation reaction between C atoms 2 and 3 of pyruvate and glyceraldehyde 3-phosphate to yield 1-deoxy-D-xylulose-5-phosphate (DXP). The polypeptide is 1-deoxy-D-xylulose-5-phosphate synthase (Nitratidesulfovibrio vulgaris (strain ATCC 29579 / DSM 644 / CCUG 34227 / NCIMB 8303 / VKM B-1760 / Hildenborough) (Desulfovibrio vulgaris)).